Consider the following 125-residue polypeptide: Large ribosomal subunit protein bL12 (125 aa).

The protein belongs to the bacterial ribosomal protein bL12 family. As to quaternary structure, homodimer. Part of the ribosomal stalk of the 50S ribosomal subunit. Forms a multimeric L10(L12)X complex, where L10 forms an elongated spine to which 2 to 4 L12 dimers bind in a sequential fashion. Binds GTP-bound translation factors.

Functionally, forms part of the ribosomal stalk which helps the ribosome interact with GTP-bound translation factors. Is thus essential for accurate translation. The polypeptide is Large ribosomal subunit protein bL12 (Mannheimia succiniciproducens (strain KCTC 0769BP / MBEL55E)).